The sequence spans 526 residues: Clostripain (526 aa).

An N-terminal signal peptide occupies residues Met-1–Ala-27. Positions Asn-28–Lys-50 are excised as a propeptide. The propeptide at Glu-182 to Arg-190 is linker. Catalysis depends on Cys-231, which acts as the Nucleophile.

Belongs to the peptidase C11 family. As to quaternary structure, heterodimer of a light chain and a heavy chain held together by strong non-covalent forces rather than by intramolecular disulfide bridges.

It carries out the reaction Preferential cleavage: Arg-|-Xaa, including Arg-|-Pro bond, but not Lys-|-Xaa.. In terms of biological role, cysteine endopeptidase with strict specificity. The sequence is that of Clostripain (cloSI) from Hathewaya histolytica (Clostridium histolyticum).